We begin with the raw amino-acid sequence, 328 residues long: Phenylalanine--tRNA ligase alpha subunit (328 aa).

Glu-245 lines the Mg(2+) pocket.

It belongs to the class-II aminoacyl-tRNA synthetase family. Phe-tRNA synthetase alpha subunit type 1 subfamily. In terms of assembly, tetramer of two alpha and two beta subunits. Mg(2+) is required as a cofactor.

Its subcellular location is the cytoplasm. The catalysed reaction is tRNA(Phe) + L-phenylalanine + ATP = L-phenylalanyl-tRNA(Phe) + AMP + diphosphate + H(+). This Helicobacter pylori (strain ATCC 700392 / 26695) (Campylobacter pylori) protein is Phenylalanine--tRNA ligase alpha subunit (pheS).